We begin with the raw amino-acid sequence, 745 residues long: Polyribonucleotide nucleotidyltransferase (745 aa).

The Mg(2+) site is built by Asp487 and Asp493. The region spanning 554 to 613 (PRIETMQIPTDKIRDVIGTGGKIIREIVEKTGAKINIEDTGVVKIASSDGKAIKAAYNWI) is the KH domain. The 69-residue stretch at 623–691 (GTIYDGTIVK…ERGKIRLSMK (69 aa)) folds into the S1 motif domain. Residues 695–745 (QETGEDITEKLKAERAERGEPEREERSDRGDRGDRGPRRDRGERRRESSGE) form a disordered region. The segment covering 701–745 (ITEKLKAERAERGEPEREERSDRGDRGDRGPRRDRGERRRESSGE) has biased composition (basic and acidic residues).

It belongs to the polyribonucleotide nucleotidyltransferase family. Mg(2+) is required as a cofactor.

Its subcellular location is the cytoplasm. It carries out the reaction RNA(n+1) + phosphate = RNA(n) + a ribonucleoside 5'-diphosphate. Its function is as follows. Involved in mRNA degradation. Catalyzes the phosphorolysis of single-stranded polyribonucleotides processively in the 3'- to 5'-direction. The chain is Polyribonucleotide nucleotidyltransferase from Methylorubrum populi (strain ATCC BAA-705 / NCIMB 13946 / BJ001) (Methylobacterium populi).